The following is a 324-amino-acid chain: Mevalonate kinase (324 aa).

103–113 serves as a coordination point for ATP; it reads PPRAGLGSSAA. Residue aspartate 154 is the Proton acceptor of the active site.

This sequence belongs to the GHMP kinase family. Mevalonate kinase subfamily. As to quaternary structure, homodimer. It depends on Mg(2+) as a cofactor.

It localises to the cytoplasm. It carries out the reaction (R)-mevalonate + ATP = (R)-5-phosphomevalonate + ADP + H(+). It participates in isoprenoid biosynthesis; isopentenyl diphosphate biosynthesis via mevalonate pathway; isopentenyl diphosphate from (R)-mevalonate: step 1/3. Catalyzes the phosphorylation of (R)-mevalonate (MVA) to (R)-mevalonate 5-phosphate (MVAP). Functions in the mevalonate (MVA) pathway leading to isopentenyl diphosphate (IPP), a key precursor for the biosynthesis of isoprenoid compounds such as archaeal membrane lipids. This chain is Mevalonate kinase, found in Aeropyrum pernix (strain ATCC 700893 / DSM 11879 / JCM 9820 / NBRC 100138 / K1).